The following is a 324-amino-acid chain: E3 ubiquitin-protein ligase SIAH2 (324 aa).

Residues 1–15 (MSRPSSTGPSANKPC) are compositionally biased toward polar residues. The tract at residues 1–42 (MSRPSSTGPSANKPCSKQPPPQPQHTPSPAAPPAAATISAAG) is disordered. A Phosphoserine modification is found at serine 6. The residue at position 16 (serine 16) is a Phosphoserine; by DYRK2. Residues 17 to 32 (KQPPPQPQHTPSPAAP) are compositionally biased toward pro residues. Threonine 26 is modified (phosphothreonine; by DYRK2). The residue at position 28 (serine 28) is a Phosphoserine; by DYRK2 and MAPK14. Residues 33-42 (PAAATISAAG) show a composition bias toward low complexity. At serine 68 the chain carries Phosphoserine; by DYRK2. The RING-type zinc finger occupies 80–115 (CPVCFDYVLPPILQCQAGHLVCNQCRQKLSCCPTCR). Threonine 119 carries the phosphothreonine; by DYRK2 modification. The SBD stretch occupies residues 130–322 (VASAVLFPCK…LGINVTISTC (193 aa)). An SIAH-type zinc finger spans residues 133-193 (AVLFPCKYAT…VMSHLMHAHK (61 aa)). The Zn(2+) site is built by cysteine 138, cysteine 145, histidine 157, cysteine 161, cysteine 168, cysteine 175, histidine 187, and histidine 192.

The protein belongs to the SINA (Seven in absentia) family. As to quaternary structure, homodimer. Interacts with UBE2E2. Interacts with PEG3. Interacts with VAV1, without mediating its ubiquitin-mediated degradation. Interacts with CACYBP/SIP. Probable component of some large E3 complex possibly composed of UBE2D1, SIAH2, CACYBP/SIP, SKP1, APC and TBL1X. Interacts with PEG10, which may inhibit its activity. Interacts with EGLN2 and SNCAIP. Interacts with DYRK2. Interacts with NR1D1 and NR1D2. Interacts with DCC. Interacts with AXIN1. Phosphorylated at Ser-28 by MAPK14, which mediates the degradation by the proteasome of EGLN3. Phosphorylated at Ser-28 by DYRK2; this increases the ubiquitin ligase activity and promotes degradation of EGLN3. In terms of tissue distribution, widely expressed at low level.

It localises to the cytoplasm. The protein resides in the nucleus. The enzyme catalyses S-ubiquitinyl-[E2 ubiquitin-conjugating enzyme]-L-cysteine + [acceptor protein]-L-lysine = [E2 ubiquitin-conjugating enzyme]-L-cysteine + N(6)-ubiquitinyl-[acceptor protein]-L-lysine.. The protein operates within protein modification; protein ubiquitination. Inhibited by interaction with SNCAIP (isoform 2, but not isoform 1). May be inhibited by interaction with PEG10. E3 ubiquitin-protein ligase that mediates ubiquitination and subsequent proteasomal degradation of target proteins. E3 ubiquitin ligases accept ubiquitin from an E2 ubiquitin-conjugating enzyme in the form of a thioester and then directly transfers the ubiquitin to targeted substrates. Mediates E3 ubiquitin ligase activity either through direct binding to substrates or by functioning as the essential RING domain subunit of larger E3 complexes. Triggers the ubiquitin-mediated degradation of many substrates, including proteins involved in transcription regulation (GPS2, POU2AF1, PML, NCOR1), a cell surface receptor (DCC), an antiapoptotic protein (BAG1), and a protein involved in synaptic vesicle function in neurons (SYP). Mediates ubiquitination and proteasomal degradation of DYRK2 in response to hypoxia. It is thereby involved in apoptosis, tumor suppression, cell cycle, transcription and signaling processes. Has some overlapping function with SIAH1. Triggers the ubiquitin-mediated degradation of TRAF2, whereas SIAH1 does not. Promotes monoubiquitination of SNCA. Regulates cellular clock function via ubiquitination of the circadian transcriptional repressors NR1D1 and NR1D2 leading to their proteasomal degradation. Plays an important role in mediating the rhythmic degradation/clearance of NR1D1 and NR1D2 contributing to their circadian profile of protein abundance. Mediates ubiquitination and degradation of EGLN2 and EGLN3 in response to the unfolded protein response (UPR), leading to their degradation and subsequent stabilization of ATF4. Also part of the Wnt signaling pathway in which it mediates the Wnt-induced ubiquitin-mediated proteasomal degradation of AXIN1. This is E3 ubiquitin-protein ligase SIAH2 (SIAH2) from Homo sapiens (Human).